The sequence spans 326 residues: MSTDSTRYPIQIEKASNDPTLLLNHTCLRVKDPARTVKFYTEHFGMKLLSRKDFEEAKFSLYFLSFPKDDIPKNKNGEPDVFSAHGVLELTHNWGTEKNPDYKINNGNEEPHRGFGHICFSVSDINKTCEELESQGVKFKKRLSEGRQKDIAFALGPDGYWIELITYSREGQEYPKGSVGNKFNHTMIRIKNPTRSLEFYQNVLGMKLLRTSEHESAKFTLYFLGYGVPKTDSVFSCESVLELTHNWGTENDPNFHYHNGNSEPQGYGHICISCDDAGALCKEIEVKYGDKIQWSPKFNQGRMKNIAFLKDPDGYSIEVVPHGLIA.

VOC domains are found at residues 22 to 167 and 182 to 322; these read LLNH…LITY and KFNH…VVPH. Histidine 25 contacts Zn(2+). Arginine 29 lines the substrate pocket. Residue glutamate 89 participates in Zn(2+) binding. Residues asparagine 93, arginine 113, histidine 117, and 147–148 contribute to the substrate site; that span reads RQ. Histidine 117 is a binding site for Zn(2+). Glutamate 163 lines the Zn(2+) pocket. Catalysis depends on proton donor/acceptor residues glutamate 163 and glutamate 318.

Belongs to the glyoxalase I family. In terms of assembly, monomer. Zn(2+) serves as cofactor.

It carries out the reaction (R)-S-lactoylglutathione = methylglyoxal + glutathione. Its pathway is secondary metabolite metabolism; methylglyoxal degradation; (R)-lactate from methylglyoxal: step 1/2. Its function is as follows. Catalyzes the conversion of hemimercaptal, formed from methylglyoxal and glutathione, to S-lactoylglutathione. Can use gamma-glutamylcysteine as a substrate. The protein is Glyoxalase I of Saccharomyces cerevisiae (strain ATCC 204508 / S288c) (Baker's yeast).